We begin with the raw amino-acid sequence, 147 residues long: Hemoglobin subunit epsilon (147 aa).

The Globin domain occupies 3–147 (HFTAEEKAAI…VAIALGHKYH (145 aa)). A phosphoserine mark is found at Ser-14 and Ser-51. Heme b is bound by residues His-64 and His-93.

It belongs to the globin family. As to quaternary structure, heterotetramer of two alpha chains and two epsilon chains in early embryonic hemoglobin Gower-2; two zeta chains and two epsilon chains in early embryonic hemoglobin Gower-1. Red blood cells.

The epsilon chain is a beta-type chain of early mammalian embryonic hemoglobin. This chain is Hemoglobin subunit epsilon (HBE1), found in Lagothrix lagotricha (Brown woolly monkey).